A 250-amino-acid polypeptide reads, in one-letter code: tRNA (guanine-N(1)-)-methyltransferase (250 aa).

Residues Gly108 and 127 to 132 (LGDFVL) each bind S-adenosyl-L-methionine.

Belongs to the RNA methyltransferase TrmD family. In terms of assembly, homodimer.

Its subcellular location is the cytoplasm. It catalyses the reaction guanosine(37) in tRNA + S-adenosyl-L-methionine = N(1)-methylguanosine(37) in tRNA + S-adenosyl-L-homocysteine + H(+). Its function is as follows. Specifically methylates guanosine-37 in various tRNAs. The sequence is that of tRNA (guanine-N(1)-)-methyltransferase from Streptococcus agalactiae serotype Ia (strain ATCC 27591 / A909 / CDC SS700).